The sequence spans 286 residues: Large ribosomal subunit protein uL4m (286 aa).

The N-terminal 26 residues, 1-26 (MTIKRNLVKTLQSIRYQATTATAHAE), are a transit peptide targeting the mitochondrion. The disordered stretch occupies residues 85 to 132 (RRVGASNPPGRSENGFSRRKLMPQKGSGRARVGDANSPTRHNGGRALA).

It belongs to the universal ribosomal protein uL4 family. In terms of assembly, component of the mitochondrial large ribosomal subunit (mt-LSU). Mature yeast 74S mitochondrial ribosomes consist of a small (37S) and a large (54S) subunit. The 37S small subunit contains a 15S ribosomal RNA (15S mt-rRNA) and 34 different proteins. The 54S large subunit contains a 21S rRNA (21S mt-rRNA) and 46 different proteins.

It localises to the mitochondrion. In terms of biological role, component of the mitochondrial ribosome (mitoribosome), a dedicated translation machinery responsible for the synthesis of mitochondrial genome-encoded proteins, including at least some of the essential transmembrane subunits of the mitochondrial respiratory chain. The mitoribosomes are attached to the mitochondrial inner membrane and translation products are cotranslationally integrated into the membrane. This Saccharomyces cerevisiae (strain ATCC 204508 / S288c) (Baker's yeast) protein is Large ribosomal subunit protein uL4m (YML6).